Here is a 290-residue protein sequence, read N- to C-terminus: 33 kDa chaperonin (290 aa).

Cystine bridges form between Cys-235–Cys-237 and Cys-268–Cys-271.

The protein belongs to the HSP33 family. Under oxidizing conditions two disulfide bonds are formed involving the reactive cysteines. Under reducing conditions zinc is bound to the reactive cysteines and the protein is inactive.

Its subcellular location is the cytoplasm. Redox regulated molecular chaperone. Protects both thermally unfolding and oxidatively damaged proteins from irreversible aggregation. Plays an important role in the bacterial defense system toward oxidative stress. The polypeptide is 33 kDa chaperonin (Streptococcus gordonii (strain Challis / ATCC 35105 / BCRC 15272 / CH1 / DL1 / V288)).